Here is a 97-residue protein sequence, read N- to C-terminus: Sec-independent protein translocase protein TatA (97 aa).

The chain crosses the membrane as a helical span at residues 1 to 21 (MGFNIWSLLIILLIVALLFGT). The disordered stretch occupies residues 28–97 (GGDLGGAIRG…SAEHHDRSTS (70 aa)). Residues 37–56 (GFKESMREGEEEEAQKRADG) show a composition bias toward basic and acidic residues. The span at 78 to 87 (QARESSSARQ) shows a compositional bias: low complexity. Residues 88-97 (SAEHHDRSTS) are compositionally biased toward basic and acidic residues.

This sequence belongs to the TatA/E family. The Tat system comprises two distinct complexes: a TatABC complex, containing multiple copies of TatA, TatB and TatC subunits, and a separate TatA complex, containing only TatA subunits. Substrates initially bind to the TatABC complex, which probably triggers association of the separate TatA complex to form the active translocon.

The protein resides in the cell inner membrane. Its function is as follows. Part of the twin-arginine translocation (Tat) system that transports large folded proteins containing a characteristic twin-arginine motif in their signal peptide across membranes. TatA could form the protein-conducting channel of the Tat system. The protein is Sec-independent protein translocase protein TatA of Halorhodospira halophila (strain DSM 244 / SL1) (Ectothiorhodospira halophila (strain DSM 244 / SL1)).